The chain runs to 689 residues: Chloride channel protein ClC-Kb (689 aa).

Residues 1-51 (MSRVLVIEQREGEEKTLIQKHIFRPFPNTRRVVIDHLQRLKNFLFRIGDDW) are Cytoplasmic-facing. A run of 2 helical transmembrane segments spans residues 52 to 83 (YFLF…RWLQ) and 92 to 112 (LRYL…TGFA). An intramembrane region (helical) is located at residues 117–128 (PHSGGSGIPELK). Residue serine 122 participates in chloride binding. A run of 2 helical transmembrane segments spans residues 142 to 161 (IKNF…AGST) and 162 to 181 (MFLG…AAYL). Asparagine 194 is a glycosylation site (N-linked (GlcNAc...) asparagine). Residues 204 to 225 (AAAAVGVSTVFGAPISGVLFSV) constitute an intramembrane region (helical). The chain crosses the membrane as a helical span at residues 237 to 256 (YWRGFFAATCGAFVFRLLAV). Positions 260, 262, 279, and 282 each coordinate Ca(2+). The next 2 membrane-spanning stretches (helical) occupy residues 283–311 (MFFF…LGYV) and 326–343 (PMYS…TFPE). The segment at residues 350-361 (ASRLTMKELLTS) is an intramembrane region (helical). The next 2 membrane-spanning stretches (helical) occupy residues 402–422 (GTLA…TTLP) and 423–442 (MPAG…GRLV). Phenylalanine 428 is a binding site for chloride. Residues 466 to 498 (GGYAWQGAPAYSGAVTHSVSTALLAFEATGQIA) constitute an intramembrane region (helical). The helical transmembrane segment at 502–522 (PVILCVLIANAFTQKLQPSFY) threads the bilayer. The Cytoplasmic segment spans residues 523 to 689 (DGTIIVKKLP…KAIEDLANPK (167 aa)). 2 CBS domains span residues 553 to 613 (MNPD…SHER) and 630 to 689 (ACSI…ANPK).

The protein belongs to the chloride channel (TC 2.A.49) family. In terms of processing, N-glycosylated on a single asparagine, probably Asn-365 or Asn-375. Expressed in two distinct regions of the kidney; the proximal convoluted tubule and the diluting segment.

It localises to the cell membrane. Functionally, voltage-gated chloride channel. Chloride channels have several functions including the regulation of cell volume, the stabilization of membrane potential, signal transduction and transepithelial transport. This is Chloride channel protein ClC-Kb (clcnkb) from Xenopus laevis (African clawed frog).